Here is a 505-residue protein sequence, read N- to C-terminus: Trans-cinnamate 4-monooxygenase (505 aa).

The helical transmembrane segment at 3–23 (LLLLEKSLIAVFVAVILATVI) threads the bilayer. (E)-cinnamate is bound by residues 213–218 (RSRLAQ) and A306. C447 provides a ligand contact to heme.

It belongs to the cytochrome P450 family. It depends on heme as a cofactor. Expressed in roots, leaves, stems, flowers and siliques.

It localises to the membrane. The catalysed reaction is (E)-cinnamate + reduced [NADPH--hemoprotein reductase] + O2 = (E)-4-coumarate + oxidized [NADPH--hemoprotein reductase] + H2O + H(+). The protein operates within phenylpropanoid metabolism; trans-4-coumarate biosynthesis; trans-4-coumarate from trans-cinnamate: step 1/1. Functionally, catalyzes the first oxidative step of the phenylpropanoid pathway in higher plants by transforming trans-cinnamate into p-coumarate. The compounds formed by this pathway are essential components for lignification, pollination, and defense against ultraviolet light, predators and pathogens. The sequence is that of Trans-cinnamate 4-monooxygenase from Arabidopsis thaliana (Mouse-ear cress).